The following is a 380-amino-acid chain: Guanine nucleotide-binding protein subunit beta (380 aa).

WD repeat units lie at residues 64 to 94 (GHSG…IVWN), 106 to 136 (LHCP…SIFN), 155 to 186 (GHKG…VLWD), 203 to 234 (GHTA…RLWD), 247 to 277 (GHED…RLFD), 296 to 326 (NELP…YVWD), and 342 to 372 (SHDG…KIWA).

The protein belongs to the WD repeat G protein beta family. G proteins are composed of 3 units, alpha, beta and gamma. In terms of tissue distribution, present in the root, leaf and tassel.

Guanine nucleotide-binding proteins (G proteins) are involved as a modulator or transducer in various transmembrane signaling systems. The beta and gamma chains are required for the GTPase activity, for replacement of GDP by GTP, and for G protein-effector interaction. In Zea mays (Maize), this protein is Guanine nucleotide-binding protein subunit beta (GB1).